The chain runs to 354 residues: 3-dehydroquinate synthase (354 aa).

Residues 100 to 104, 124 to 125, Lys136, Lys145, and 163 to 166 contribute to the NAD(+) site; these read GATGD, TT, and FLKT. Zn(2+) is bound by residues Glu178, His242, and His256.

It belongs to the sugar phosphate cyclases superfamily. Dehydroquinate synthase family. The cofactor is NAD(+). Co(2+) serves as cofactor. It depends on Zn(2+) as a cofactor.

It localises to the cytoplasm. It carries out the reaction 7-phospho-2-dehydro-3-deoxy-D-arabino-heptonate = 3-dehydroquinate + phosphate. It participates in metabolic intermediate biosynthesis; chorismate biosynthesis; chorismate from D-erythrose 4-phosphate and phosphoenolpyruvate: step 2/7. In terms of biological role, catalyzes the conversion of 3-deoxy-D-arabino-heptulosonate 7-phosphate (DAHP) to dehydroquinate (DHQ). In Staphylococcus aureus (strain COL), this protein is 3-dehydroquinate synthase.